The chain runs to 1348 residues: Vascular endothelial growth factor receptor 2 (1348 aa).

The signal sequence occupies residues 1-20; it reads MELGPLRVLTVLLCLAPVFA. The Extracellular portion of the chain corresponds to 21–756; it reads GLFISMDQPT…GAEEKTNLEL (736 aa). 20 N-linked (GlcNAc...) asparagine glycosylation sites follow: asparagine 43, asparagine 47, asparagine 63, asparagine 93, asparagine 138, asparagine 153, asparagine 201, asparagine 240, asparagine 290, asparagine 310, asparagine 365, asparagine 386, asparagine 513, asparagine 556, asparagine 603, asparagine 613, asparagine 622, asparagine 666, asparagine 688, and asparagine 710. Ig-like C2-type domains are found at residues 43 to 106, 138 to 202, 220 to 312, 320 to 405, 412 to 534, 540 to 651, and 658 to 744; these read NDTL…GDSQ, NKTV…IDNE, DLTM…KNSS, PFIH…HTFT, PQIG…RVIS, GLEI…KHLT, and PRLV…AFFS. An intrachain disulfide couples cysteine 50 to cysteine 100. An intrachain disulfide couples cysteine 145 to cysteine 195. Cysteine 241 and cysteine 299 form a disulfide bridge. A disulfide bridge links cysteine 436 with cysteine 520. Cysteine 561 and cysteine 633 are oxidised to a cystine. Cysteines 679 and 728 form a disulfide. The helical transmembrane segment at 757–777 threads the bilayer; sequence IILVGTAVIAMFFWLLLVIIL. At 778-1348 the chain is on the cytoplasmic side; the sequence is RTVKRANGGD…SPAPVASLPL (571 aa). Residues 825–1155 form the Protein kinase domain; it reads LKLGKPLGRG…FSELVEHLGN (331 aa). ATP is bound by residues 831-839 and lysine 859; that span reads LGRGAFGQV. Residues 958 to 967 are compositionally biased toward low complexity; it reads ITSSQSSTSS. A disordered region spans residues 958-983; the sequence is ITSSQSSTSSGFVEERSLSDVEEEDA. The active-site Proton acceptor is aspartate 1021. Tyrosine 1047, tyrosine 1052, tyrosine 1168, and tyrosine 1207 each carry phosphotyrosine; by autocatalysis. Positions 1280–1302 are disordered; sequence PSKSNESVMSEASNQTSGYQSGY.

Belongs to the protein kinase superfamily. Tyr protein kinase family. CSF-1/PDGF receptor subfamily. Post-translationally, autophosphorylated on tyrosine residues upon ligand binding. Autophosphorylation occurs in trans, i.e. one subunit of the dimeric receptor phosphorylates tyrosine residues on the other subunit. As to expression, in all endothelial tissues during onset of vascularization. In later development, present in lung, heart, intestine and skin.

Its subcellular location is the cell membrane. The protein localises to the cytoplasmic vesicle. It localises to the early endosome. It is found in the cell junction. The protein resides in the endoplasmic reticulum. The enzyme catalyses L-tyrosyl-[protein] + ATP = O-phospho-L-tyrosyl-[protein] + ADP + H(+). With respect to regulation, present in an inactive conformation in the absence of bound ligand. Binding of VEGFA, VEGFC or VEGFD leads to dimerization and activation by autophosphorylation on tyrosine residues. Functionally, tyrosine-protein kinase that acts as a cell-surface receptor for VEGFA, VEGFC and/or VEGFD and plays an essential role in the regulation of angiogenesis and vascular development. Promotes proliferation, survival, migration and differentiation of endothelial cells. Promotes reorganization of the actin cytoskeleton. Binding of vascular growth factors leads to the activation of several signaling cascades. Activation of PLCG1 leads to the production of the cellular signaling molecules diacylglycerol and inositol 1,4,5-trisphosphate and the activation of protein kinase C. Mediates activation of MAPK1/ERK2, MAPK3/ERK1 and the MAP kinase signaling pathway, as well as of the AKT1 signaling pathway. Mediates phosphorylation of PIK3R1, the regulatory subunit of phosphatidylinositol 3-kinase, reorganization of the actin cytoskeleton and activation of PTK2/FAK1. Required for VEGFA-mediated induction of NOS2 and NOS3, leading to the production of the signaling molecule nitric oxide (NO) by endothelial cells. The sequence is that of Vascular endothelial growth factor receptor 2 from Coturnix japonica (Japanese quail).